We begin with the raw amino-acid sequence, 467 residues long: MTARTLYDKIWDAHLAHEAEDGTCLLYIDRHLVHEVTSPQAFEGLRMAGRTVRAPDKTIAVPDHNVPTTLGRENPDQMTEDSRIQVEALDKNAKDFGIHYYPVSDIRQGIVHIVGPEQGWTLPGMTVVCGDSHTATHGAFGALAHGIGTSEVEHVLATQTLIQKKSKNMKVEITGKLRPGVTAKDITLSVIGATGTAGGTGYVIEYCGEAIRDLSMEGRMTVCNMAIEGGARAGLIAPDEKTYEYVQGRPHAPKGAQWEAALAWWKTLYSDDDAHWDKVVTIKGEDIAPVVTWGTSPEDVLPISAMVPAPEDFTGGKVDAARRSLDYMGLTPGTPLSEIEIDTVFIGSCTNGRIEDLRAAAEILKGKKIAVKRAMVVPGSGLVRAQAEEEGLADIFKQAGFEWRMAGCSMCLAMNPDQLSEGERCASTSNRNFEGRQGYKGRTHLVSPAMAAAAAVTGKLTDVRDLM.

Residues Cys-349, Cys-408, and Cys-411 each contribute to the [4Fe-4S] cluster site.

This sequence belongs to the aconitase/IPM isomerase family. LeuC type 1 subfamily. As to quaternary structure, heterodimer of LeuC and LeuD. [4Fe-4S] cluster serves as cofactor.

It catalyses the reaction (2R,3S)-3-isopropylmalate = (2S)-2-isopropylmalate. Its pathway is amino-acid biosynthesis; L-leucine biosynthesis; L-leucine from 3-methyl-2-oxobutanoate: step 2/4. Functionally, catalyzes the isomerization between 2-isopropylmalate and 3-isopropylmalate, via the formation of 2-isopropylmaleate. This is 3-isopropylmalate dehydratase large subunit from Dinoroseobacter shibae (strain DSM 16493 / NCIMB 14021 / DFL 12).